The chain runs to 88 residues: Apolipoprotein C-I (88 aa).

The first 26 residues, 1–26, serve as a signal peptide directing secretion; it reads MRLILSLPVLVVVLSMVLEGPAPAQA.

The protein belongs to the apolipoprotein C1 family. As to expression, expressed in the liver.

The protein localises to the secreted. Functionally, inhibitor of lipoprotein binding to the low density lipoprotein (LDL) receptor, LDL receptor-related protein, and very low density lipoprotein (VLDL) receptor. Associates with high density lipoproteins (HDL) and the triacylglycerol-rich lipoproteins in the plasma and makes up about 10% of the protein of the VLDL and 2% of that of HDL. Appears to interfere directly with fatty acid uptake and is also the major plasma inhibitor of cholesteryl ester transfer protein (CETP). Binds free fatty acids and reduces their intracellular esterification. Modulates the interaction of APOE with beta-migrating VLDL and inhibits binding of beta-VLDL to the LDL receptor-related protein. The sequence is that of Apolipoprotein C-I (APOC1) from Canis lupus familiaris (Dog).